The chain runs to 688 residues: Glycine--tRNA ligase beta subunit (688 aa).

This sequence belongs to the class-II aminoacyl-tRNA synthetase family. In terms of assembly, tetramer of two alpha and two beta subunits.

It localises to the cytoplasm. It catalyses the reaction tRNA(Gly) + glycine + ATP = glycyl-tRNA(Gly) + AMP + diphosphate. This is Glycine--tRNA ligase beta subunit (glyS) from Haemophilus influenzae (strain ATCC 51907 / DSM 11121 / KW20 / Rd).